Consider the following 209-residue polypeptide: Lectin (209 aa).

Homodimer; non-covalently linked.

Binds chito-oligosaccherides. Has hemagglutinating activity towards rabbit erythrocytes. The protein is Lectin of Luffa acutangula (Ridged gourd).